A 588-amino-acid polypeptide reads, in one-letter code: MEYAAIHHQPFSTDAYSYDGRTVHIKIRTKKGDADHIRFIWGDPYEYNDGKWSANEQPMRKIAATEMHDYWFAEVVPPFRRLQYAFVVTDDHEDIFFGSSGVCPYNEKTLETIHYYFKFPFVHEADTFQAPEWVKSTVWYQIFPERFANGREDLSPKNALPWGSKDPDVNDFFGGDLQGIVDKLDYLEDLGVNGIYLTPIFSAPSNHKYDTLDYFSIDPHFGDPELFRTLVSQLHQRGMRIMLDAVFNHIGSASPQWQDVVKNGDQSRYKDWFHIHSFPVTDDNYDRFAFTADMPKLNTANPEVQKYLLDIALYWIREFDIDGWRLDVANEVDHVFWKTFRQAVSTEKPDVYILGEIWHSAEPWLRGDEFHAAMNYPFTEPMIEYFADQTISASRMAHRVNAHLMNGMKQANEVMFNLLDSHDTKRLLTRCRNDEKKARALLAFMFAQTGSPCIYYGTEIGLNGENDPLCRKCMVWEKEKQNQDMLQFMKRLIALRKQENTLLTEGHLEWNLLDDKNDFISFSRTLDEKILIYFFNQGNVVQHVSLRELNIDRNKKICDAWTEQPLQHHDVIAVQPGEFLILSAAAPV.

Residues Asn-149, Ser-155, Gly-174, and Asp-176 each contribute to the Ca(2+) site. 2 residues coordinate substrate: His-249 and Arg-325. Asp-327 acts as the Nucleophile in catalysis. The active-site Proton donor is the Glu-356. Residues 422 to 423, Asp-467, and Arg-471 contribute to the substrate site; that span reads HD.

The protein belongs to the glycosyl hydrolase 13 family. BbmA subfamily. In terms of assembly, monomer or homodimer; in equilibrium. Ca(2+) serves as cofactor.

Its subcellular location is the cytoplasm. In terms of biological role, hydrolyzes beta-cyclodextrin to maltose and glucose, soluble starch to maltose and glucose, and pullulan to panose with trace amounts of maltose and glucose. It is also able to hydrolyze acarbose. Can also exhibit a transglycosylation activity transferring glucose or maltose to another moiety of sugars by forming alpha-(1,6)- and alpha-(1,3)-glycosidic linkages upon the hydrolysis of substrate at concentrations of 5% or higher. This is Intracellular maltogenic amylase (bbmA) from Bacillus subtilis (strain 168).